The following is a 234-amino-acid chain: UPF0758 protein Rfer_3252 (234 aa).

The 123-residue stretch at 112–234 (IFATPDAVKH…ALSMAERGLL (123 aa)) folds into the MPN domain. 3 residues coordinate Zn(2+): His183, His185, and Asp196. The JAMM motif motif lies at 183–196 (HNHPSGTVQPSRAD).

It belongs to the UPF0758 family.

The sequence is that of UPF0758 protein Rfer_3252 from Albidiferax ferrireducens (strain ATCC BAA-621 / DSM 15236 / T118) (Rhodoferax ferrireducens).